We begin with the raw amino-acid sequence, 772 residues long: uncharacterized protein (772 aa).

2 helical membrane passes run 16 to 36 and 301 to 321; these read LITF…LFSY and IGWI…LFSW. The region spanning 670–768 is the HTH araC/xylS-type domain; the sequence is DNIIHIIHHE…GITPGNYRQQ (99 aa). DNA-binding regions (H-T-H motif) lie at residues 687 to 708 and 735 to 758; these read DEIA…KKEM and VKDI…KKLE.

Its subcellular location is the cell membrane. This is an uncharacterized protein from Bacillus subtilis (strain 168).